A 21-amino-acid polypeptide reads, in one-letter code: Thylakoid lumenal 13.8 kDa protein (21 aa).

Its subcellular location is the plastid. The protein resides in the chloroplast thylakoid lumen. The chain is Thylakoid lumenal 13.8 kDa protein from Spinacia oleracea (Spinach).